Here is a 172-residue protein sequence, read N- to C-terminus: Large ribosomal subunit protein uL10 (172 aa).

This sequence belongs to the universal ribosomal protein uL10 family. As to quaternary structure, part of the ribosomal stalk of the 50S ribosomal subunit. The N-terminus interacts with L11 and the large rRNA to form the base of the stalk. The C-terminus forms an elongated spine to which L12 dimers bind in a sequential fashion forming a multimeric L10(L12)X complex.

Forms part of the ribosomal stalk, playing a central role in the interaction of the ribosome with GTP-bound translation factors. This Rhizobium rhizogenes (strain K84 / ATCC BAA-868) (Agrobacterium radiobacter) protein is Large ribosomal subunit protein uL10.